Here is a 390-residue protein sequence, read N- to C-terminus: UPF0496 protein At1g20180 (390 aa).

2 consecutive transmembrane segments (helical) span residues 228-248 (LGGY…LIIA) and 250-270 (HSIL…FCLL).

It belongs to the UPF0496 family.

It localises to the membrane. In Arabidopsis thaliana (Mouse-ear cress), this protein is UPF0496 protein At1g20180.